A 173-amino-acid chain; its full sequence is CASP-like protein 2D1 (173 aa).

At 1 to 9 (MAPLLKLLD) the chain is on the cytoplasmic side. The helical transmembrane segment at 10–29 (SSLRVSVIPLSAATIWLTVT) threads the bilayer. The Extracellular segment spans residues 30-50 (NHQDNSSYGNLKYSNIMGLKY). N-linked (GlcNAc...) asparagine glycosylation occurs at asparagine 34. The chain crosses the membrane as a helical span at residues 51–71 (MVCISAICASYAFVAAVSIWI). Residues 72-86 (KCLVNKVWLFFVSDQ) lie on the Cytoplasmic side of the membrane. A helical transmembrane segment spans residues 87-107 (IIAYLMVTSVAAAMEILYIAY). Residues 108–131 (NGDQKVTWSEACTSYGKFCNGMKT) lie on the Extracellular side of the membrane. The chain crosses the membrane as a helical span at residues 132–152 (ALILHALTLCFFIVLAVISAY). Residues 153 to 173 (RAFSMYQPPVSSKETVEGDAT) are Cytoplasmic-facing.

Belongs to the Casparian strip membrane proteins (CASP) family. As to quaternary structure, homodimer and heterodimers.

The protein resides in the cell membrane. In Ricinus communis (Castor bean), this protein is CASP-like protein 2D1.